Consider the following 801-residue polypeptide: Growth-differentiation transition protein 7 (801 aa).

An N-terminal signal peptide occupies residues 1 to 22 (MIKTILIKLILLVIFCYHFLFA).

It belongs to the GDT family.

Its subcellular location is the secreted. This is Growth-differentiation transition protein 7 (gdt7) from Dictyostelium discoideum (Social amoeba).